The following is a 460-amino-acid chain: ATP synthase subunit beta (460 aa).

Residue 150 to 157 coordinates ATP; it reads GGAGVGKT.

Belongs to the ATPase alpha/beta chains family. In terms of assembly, F-type ATPases have 2 components, CF(1) - the catalytic core - and CF(0) - the membrane proton channel. CF(1) has five subunits: alpha(3), beta(3), gamma(1), delta(1), epsilon(1). CF(0) has three main subunits: a(1), b(2) and c(9-12). The alpha and beta chains form an alternating ring which encloses part of the gamma chain. CF(1) is attached to CF(0) by a central stalk formed by the gamma and epsilon chains, while a peripheral stalk is formed by the delta and b chains.

The protein localises to the cell inner membrane. The catalysed reaction is ATP + H2O + 4 H(+)(in) = ADP + phosphate + 5 H(+)(out). Functionally, produces ATP from ADP in the presence of a proton gradient across the membrane. The catalytic sites are hosted primarily by the beta subunits. This chain is ATP synthase subunit beta, found in Salmonella paratyphi A (strain ATCC 9150 / SARB42).